A 621-amino-acid chain; its full sequence is 1-deoxy-D-xylulose-5-phosphate synthase (621 aa).

Thiamine diphosphate contacts are provided by residues histidine 80 and 121 to 123 (GHS). Mg(2+) is bound at residue aspartate 152. Thiamine diphosphate is bound by residues 153–154 (GA), asparagine 181, tyrosine 288, and glutamate 370. Asparagine 181 serves as a coordination point for Mg(2+).

Belongs to the transketolase family. DXPS subfamily. In terms of assembly, homodimer. The cofactor is Mg(2+). Thiamine diphosphate is required as a cofactor.

It catalyses the reaction D-glyceraldehyde 3-phosphate + pyruvate + H(+) = 1-deoxy-D-xylulose 5-phosphate + CO2. The protein operates within metabolic intermediate biosynthesis; 1-deoxy-D-xylulose 5-phosphate biosynthesis; 1-deoxy-D-xylulose 5-phosphate from D-glyceraldehyde 3-phosphate and pyruvate: step 1/1. Its function is as follows. Catalyzes the acyloin condensation reaction between C atoms 2 and 3 of pyruvate and glyceraldehyde 3-phosphate to yield 1-deoxy-D-xylulose-5-phosphate (DXP). The polypeptide is 1-deoxy-D-xylulose-5-phosphate synthase (Pseudoalteromonas atlantica (strain T6c / ATCC BAA-1087)).